The chain runs to 251 residues: uncharacterized protein (251 aa).

N-linked (GlcNAc...) asparagine; by host glycans are attached at residues Asn-149, Asn-152, and Asn-207. A helical membrane pass occupies residues 226 to 246 (YLIFIIIIIIFIILILLWIKY).

It belongs to the glycosyltransferase 32 family.

The protein localises to the membrane. This is an uncharacterized protein from Acanthamoeba polyphaga (Amoeba).